The sequence spans 123 residues: Large ribosomal subunit protein uL14 (123 aa).

The protein belongs to the universal ribosomal protein uL14 family. Part of the 50S ribosomal subunit. Forms a cluster with proteins L3 and L19. In the 70S ribosome, L14 and L19 interact and together make contacts with the 16S rRNA in bridges B5 and B8.

Binds to 23S rRNA. Forms part of two intersubunit bridges in the 70S ribosome. This Aliivibrio salmonicida (strain LFI1238) (Vibrio salmonicida (strain LFI1238)) protein is Large ribosomal subunit protein uL14.